A 219-amino-acid chain; its full sequence is Chloramphenicol acetyltransferase (219 aa).

The active-site Proton acceptor is the His-193.

It belongs to the chloramphenicol acetyltransferase family.

It carries out the reaction chloramphenicol + acetyl-CoA = chloramphenicol 3-acetate + CoA. Its function is as follows. This enzyme is an effector of chloramphenicol resistance in bacteria. The polypeptide is Chloramphenicol acetyltransferase (cat) (Acinetobacter calcoaceticus subsp. anitratus).